The sequence spans 281 residues: Transformer-2 protein homolog alpha (281 aa).

Residues 1–116 (MSDVEENNFE…TGSRANPDPN (116 aa)) are disordered. Position 2 is an N-acetylserine (serine 2). 2 positions are modified to phosphoserine: serine 2 and serine 14. Threonine 24 carries the post-translational modification Phosphothreonine. Positions 51 to 82 (RSRSKSRSRSRRHSHRRYTRSRSHSHRRRSRS) are enriched in basic residues. Serine 80, serine 82, and serine 84 each carry phosphoserine. Threonine 86 is subject to Phosphothreonine. A compositionally biased stretch (basic residues) spans 90–108 (RRRRSRSHSPMSNRRRHTG). Residues serine 94 and serine 96 each carry the phosphoserine modification. The RRM domain maps to 117 to 195 (TCLGVFGLSL…RRIRVDYSIT (79 aa)). Lysine 196 participates in a covalent cross-link: Glycyl lysine isopeptide (Lys-Gly) (interchain with G-Cter in SUMO2). Residues 196 to 223 (KRAHTPTPGIYMGRPTHSGGGGGGGGGG) are linker. Residues 199–281 (HTPTPGIYMG…RSRSYSPRRY (83 aa)) are disordered. Residues threonine 200 and threonine 202 each carry the phosphothreonine modification. Gly residues predominate over residues 213 to 231 (SGGGGGGGGGGGGGGGGGG). Arginine 233 is modified (omega-N-methylarginine). Positions 233–257 (RRRDSYYDRGYDRGYDRYEDYDYRR) are enriched in basic and acidic residues. At serine 237 the chain carries Phosphoserine. Positions 267–281 (YRSRSRSRSYSPRRY) are enriched in basic residues.

It belongs to the splicing factor SR family. Binds to A3 enhancer proteins SRp75, SRp55, SRp40 and SRp30. Interacts with ILDR1 (via C-terminus) and ILDR2. Phosphorylated in the RS domains. In terms of tissue distribution, expressed in inner ear.

Its subcellular location is the nucleus. Functionally, sequence-specific RNA-binding protein which participates in the control of pre-mRNA splicing. This Mus musculus (Mouse) protein is Transformer-2 protein homolog alpha.